The sequence spans 118 residues: Small ribosomal subunit protein uS13 (118 aa).

The tract at residues 91 to 118 (HRRSLPVRGQRTKTNARTRKGPRKPIKA) is disordered.

It belongs to the universal ribosomal protein uS13 family. In terms of assembly, part of the 30S ribosomal subunit. Forms a loose heterodimer with protein S19. Forms two bridges to the 50S subunit in the 70S ribosome.

In terms of biological role, located at the top of the head of the 30S subunit, it contacts several helices of the 16S rRNA. In the 70S ribosome it contacts the 23S rRNA (bridge B1a) and protein L5 of the 50S subunit (bridge B1b), connecting the 2 subunits; these bridges are implicated in subunit movement. Contacts the tRNAs in the A and P-sites. This is Small ribosomal subunit protein uS13 from Francisella philomiragia subsp. philomiragia (strain ATCC 25017 / CCUG 19701 / FSC 153 / O#319-036).